Here is a 105-residue protein sequence, read N- to C-terminus: Cuticle protein AMP1A (105 aa).

Residues aspartate 1–tyrosine 21 form a disordered region. One can recognise a Chitin-binding type R&amp;R domain in the interval aspartate 16–proline 81.

In terms of tissue distribution, arthrodial membrane.

This chain is Cuticle protein AMP1A, found in Homarus americanus (American lobster).